The chain runs to 255 residues: Fasciclin-like arabinogalactan protein 14 (255 aa).

The N-terminal stretch at 1 to 23 (MSSSLTIFFFFFASTFLYTSSNS) is a signal peptide. Residues 24–169 (FNITNILNEH…ISVLHISSAI (146 aa)) form the FAS1 domain. 4 N-linked (GlcNAc...) asparagine glycosylation sites follow: Asn-25, Asn-99, Asn-125, and Asn-159. Residues 179 to 231 (PTASPLSPVSSPPRPAESPNDDGQDFDEPPSSAPGAAADEPSENAGSANGVSR) form a disordered region. Residues 197-206 (PNDDGQDFDE) are compositionally biased toward acidic residues. Positions 222–231 (NAGSANGVSR) are enriched in polar residues. A lipid anchor (GPI-anchor amidated serine) is attached at Ser-225. Positions 226-255 (ANGVSRNDSQPAFAFTLLMSFIWWFMARLR) are cleaved as a propeptide — removed in mature form.

The protein belongs to the fasciclin-like AGP family.

It localises to the cell membrane. Its function is as follows. May be a cell surface adhesion protein. The polypeptide is Fasciclin-like arabinogalactan protein 14 (FLA14) (Arabidopsis thaliana (Mouse-ear cress)).